We begin with the raw amino-acid sequence, 441 residues long: Glutamate--tRNA ligase 1 (441 aa).

Positions Pro7–Asn17 match the 'HIGH' region motif. The short motif at Lys236 to Arg240 is the 'KMSKS' region element. Lys239 lines the ATP pocket.

The protein belongs to the class-I aminoacyl-tRNA synthetase family. Glutamate--tRNA ligase type 1 subfamily. In terms of assembly, monomer.

The protein localises to the cytoplasm. The catalysed reaction is tRNA(Glu) + L-glutamate + ATP = L-glutamyl-tRNA(Glu) + AMP + diphosphate. Functionally, catalyzes the attachment of glutamate to tRNA(Glu) in a two-step reaction: glutamate is first activated by ATP to form Glu-AMP and then transferred to the acceptor end of tRNA(Glu). This is Glutamate--tRNA ligase 1 from Anaplasma marginale (strain St. Maries).